The sequence spans 228 residues: Large ribosomal subunit protein uL4 (228 aa).

2 disordered regions span residues 45–102 (GRQG…SQRT) and 208–228 (PAKG…EANQ). Low complexity predominate over residues 208-221 (PAKGKTAKAAATSG).

It belongs to the universal ribosomal protein uL4 family. Part of the 50S ribosomal subunit.

One of the primary rRNA binding proteins, this protein initially binds near the 5'-end of the 23S rRNA. It is important during the early stages of 50S assembly. It makes multiple contacts with different domains of the 23S rRNA in the assembled 50S subunit and ribosome. In terms of biological role, forms part of the polypeptide exit tunnel. The sequence is that of Large ribosomal subunit protein uL4 from Saccharopolyspora erythraea (strain ATCC 11635 / DSM 40517 / JCM 4748 / NBRC 13426 / NCIMB 8594 / NRRL 2338).